The following is a 244-amino-acid chain: SURF1-like protein (244 aa).

2 helical membrane-spanning segments follow: residues I7 to S23 and Y201 to Y219.

This sequence belongs to the SURF1 family.

Its subcellular location is the cell membrane. This chain is SURF1-like protein, found in Rickettsia prowazekii (strain Madrid E).